The sequence spans 108 residues: MAEAWRYSAQGVAVAVRVTPRGGRDDIDGLETLSDGRPVVKVRVRAIADGGEANRAVTELLAKAVGVPKRNVRLLSGATSRQKQIAIDGDPKQLGEALRRLVAAKPAE.

The protein belongs to the UPF0235 family.

The sequence is that of UPF0235 protein Rpal_0418 from Rhodopseudomonas palustris (strain TIE-1).